The sequence spans 381 residues: Fe-S cluster assembly protein DRE2 (381 aa).

An N-terminal SAM-like domain region spans residues 8 to 165; the sequence is AQGSGRFLLL…KPDFGAQQAV (158 aa). Residues 100 to 134 are disordered; it reads RNRDNQIWGSGSDSAAGLGSSDGDGGGGEKMSSSE. Low complexity predominate over residues 108 to 118; that stretch reads GSGSDSAAGLG. Residues 119 to 128 are compositionally biased toward gly residues; sequence SSDGDGGGGE. Residues 166 to 273 are linker; that stretch reads PLKLGRKKNL…EEELLGEYDM (108 aa). [2Fe-2S] cluster is bound by residues Cys283, Cys294, Cys297, and Cys299. The tract at residues 283-299 is fe-S binding site A; that stretch reads CRPKAGKRRRACKDCTC. Residues Cys344, Cys347, Cys355, and Cys358 each coordinate [4Fe-4S] cluster. 2 consecutive short sequence motifs (cx2C motif) follow at residues 344-347 and 355-358; these read CGNC and CDGC. Residues 344-358 are fe-S binding site B; it reads CGNCALGDAFRCDGC.

It belongs to the anamorsin family. Monomer. Interacts with TAH18. Interacts with MIA40. [2Fe-2S] cluster is required as a cofactor. [4Fe-4S] cluster serves as cofactor.

It is found in the cytoplasm. The protein resides in the mitochondrion intermembrane space. Functionally, component of the cytosolic iron-sulfur (Fe-S) protein assembly (CIA) machinery required for the maturation of extramitochondrial Fe-S proteins. Part of an electron transfer chain functioning in an early step of cytosolic Fe-S biogenesis, facilitating the de novo assembly of a [4Fe-4S] cluster on the scaffold complex CFD1-NBP35. Electrons are transferred to DRE2 from NADPH via the FAD- and FMN-containing protein TAH18. TAH18-DRE2 are also required for the assembly of the diferric tyrosyl radical cofactor of ribonucleotide reductase (RNR), probably by providing electrons for reduction during radical cofactor maturation in the catalytic small subunit RNR2. The protein is Fe-S cluster assembly protein DRE2 of Paracoccidioides brasiliensis (strain Pb18).